Reading from the N-terminus, the 124-residue chain is Small ribosomal subunit protein bS6 (124 aa).

This sequence belongs to the bacterial ribosomal protein bS6 family.

Binds together with bS18 to 16S ribosomal RNA. This Actinobacillus pleuropneumoniae serotype 5b (strain L20) protein is Small ribosomal subunit protein bS6.